A 192-amino-acid polypeptide reads, in one-letter code: Peptidyl-tRNA hydrolase (192 aa).

Y17 provides a ligand contact to tRNA. Catalysis depends on H22, which acts as the Proton acceptor. Residues Y68, N70, and N116 each coordinate tRNA.

It belongs to the PTH family. As to quaternary structure, monomer.

The protein localises to the cytoplasm. The catalysed reaction is an N-acyl-L-alpha-aminoacyl-tRNA + H2O = an N-acyl-L-amino acid + a tRNA + H(+). Hydrolyzes ribosome-free peptidyl-tRNAs (with 1 or more amino acids incorporated), which drop off the ribosome during protein synthesis, or as a result of ribosome stalling. In terms of biological role, catalyzes the release of premature peptidyl moieties from peptidyl-tRNA molecules trapped in stalled 50S ribosomal subunits, and thus maintains levels of free tRNAs and 50S ribosomes. This is Peptidyl-tRNA hydrolase from Mycolicibacterium gilvum (strain PYR-GCK) (Mycobacterium gilvum (strain PYR-GCK)).